Reading from the N-terminus, the 403-residue chain is Shaggy-related protein kinase GSK4 (403 aa).

One can recognise a Protein kinase domain in the interval 71-355; that stretch reads YMAERVVGTG…ALEACAHSFF (285 aa). ATP-binding positions include 77 to 85 and Lys100; that span reads VGTGSFGVV. The active-site Proton acceptor is Asp196.

This sequence belongs to the protein kinase superfamily. CMGC Ser/Thr protein kinase family. GSK-3 subfamily. In terms of assembly, interacts with LIC.

The enzyme catalyses L-seryl-[protein] + ATP = O-phospho-L-seryl-[protein] + ADP + H(+). It catalyses the reaction L-threonyl-[protein] + ATP = O-phospho-L-threonyl-[protein] + ADP + H(+). In terms of biological role, probable serine-threonine kinase that may regulate brassinosteroid signaling. This chain is Shaggy-related protein kinase GSK4, found in Oryza sativa subsp. japonica (Rice).